The primary structure comprises 444 residues: Zinc protease PqqE (444 aa).

An N-terminal signal peptide occupies residues 1 to 28 (MKHFSVKRLLGLSSVLLVTLGASMHAQS). Residue H78 participates in Zn(2+) binding. E81 acts as the Proton acceptor in catalysis. Positions 82 and 158 each coordinate Zn(2+).

The protein belongs to the peptidase M16 family. Zn(2+) is required as a cofactor.

Its subcellular location is the secreted. Its activity is regulated as follows. Can function alone, but full activity requires the presence of the non-peptidase homolog YmxG. Virulence factor that cleaves the cytoplasmic domain of the human junctional adhesion molecule A (JAM-A), compromising gastric epithelial barrier function and cell-cell adhesion. Cleavage of JAM-A occurs after Ala-285 or, to a lesser extent, before Ala-285. This Helicobacter pylori (strain ATCC 700392 / 26695) (Campylobacter pylori) protein is Zinc protease PqqE.